The chain runs to 432 residues: Anaerobic glycerol-3-phosphate dehydrogenase subunit B (432 aa).

Belongs to the anaerobic G-3-P dehydrogenase subunit B family. As to quaternary structure, composed of a catalytic GlpA/B dimer and of membrane bound GlpC. The cofactor is FMN.

It carries out the reaction a quinone + sn-glycerol 3-phosphate = dihydroxyacetone phosphate + a quinol. It participates in polyol metabolism; glycerol degradation via glycerol kinase pathway; glycerone phosphate from sn-glycerol 3-phosphate (anaerobic route): step 1/1. Conversion of glycerol 3-phosphate to dihydroxyacetone. Uses fumarate or nitrate as electron acceptor. In Haemophilus influenzae (strain PittEE), this protein is Anaerobic glycerol-3-phosphate dehydrogenase subunit B.